The sequence spans 229 residues: Protein rep (229 aa).

A DNA-binding site is contributed by tyrosine 214.

It belongs to the Gram-positive plasmids replication protein type 1 family.

Produces a single-strand nick in a specific site of the plasmid, and this nick results in single-strand replication by rolling circle mechanism. This chain is Protein rep, found in Staphylococcus aureus.